The primary structure comprises 185 residues: Elongation factor P (185 aa).

Belongs to the elongation factor P family.

It localises to the cytoplasm. Its pathway is protein biosynthesis; polypeptide chain elongation. Involved in peptide bond synthesis. Stimulates efficient translation and peptide-bond synthesis on native or reconstituted 70S ribosomes in vitro. Probably functions indirectly by altering the affinity of the ribosome for aminoacyl-tRNA, thus increasing their reactivity as acceptors for peptidyl transferase. The protein is Elongation factor P of Trichodesmium erythraeum (strain IMS101).